Here is a 178-residue protein sequence, read N- to C-terminus: Interleukin-1 receptor antagonist protein (178 aa).

The signal sequence occupies residues 1 to 26 (MEICRGPYSHLISLLLILLFRSESAG). A disulfide bond links Cys-92 and Cys-142. Asn-110 is a glycosylation site (N-linked (GlcNAc...) asparagine).

The protein belongs to the IL-1 family.

Its subcellular location is the secreted. In terms of biological role, anti-inflammatory antagonist of interleukin-1 family of proinflammatory cytokines such as interleukin-1beta/IL1B and interleukin-1alpha/IL1A. Protects from immune dysregulation and uncontrolled systemic inflammation triggered by IL1 for a range of innate stimulatory agents such as pathogens. This Rattus norvegicus (Rat) protein is Interleukin-1 receptor antagonist protein (Il1rn).